Here is a 678-residue protein sequence, read N- to C-terminus: Amino-acid acetyltransferase, mitochondrial (678 aa).

The tract at residues 86 to 111 (LKAQHPPKAQTEPTTGHSKGTVTQSL) is disordered. Polar residues predominate over residues 96–111 (TEPTTGHSKGTVTQSL). The 170-residue stretch at 499 to 668 (NRPRLSLDDP…YEQVCRSIQP (170 aa)) folds into the N-acetyltransferase domain.

This sequence belongs to the acetyltransferase family.

It is found in the mitochondrion. It catalyses the reaction L-glutamate + acetyl-CoA = N-acetyl-L-glutamate + CoA + H(+). It functions in the pathway amino-acid biosynthesis; L-arginine biosynthesis; N(2)-acetyl-L-ornithine from L-glutamate: step 1/4. Its function is as follows. N-acetylglutamate synthase involved in arginine biosynthesis. The sequence is that of Amino-acid acetyltransferase, mitochondrial (arg2) from Aspergillus oryzae (strain ATCC 42149 / RIB 40) (Yellow koji mold).